The chain runs to 102 residues: Acylphosphatase 1 (102 aa).

The Acylphosphatase-like domain maps to 12-100 (TRLVRVRGRV…PRFDRFEQLP (89 aa)). Catalysis depends on residues R27 and N45.

It belongs to the acylphosphatase family.

It catalyses the reaction an acyl phosphate + H2O = a carboxylate + phosphate + H(+). This is Acylphosphatase 1 (acyP1) from Ralstonia nicotianae (strain ATCC BAA-1114 / GMI1000) (Ralstonia solanacearum).